We begin with the raw amino-acid sequence, 462 residues long: Cysteine--tRNA ligase (462 aa).

Residue cysteine 28 participates in Zn(2+) binding. Positions 30–40 match the 'HIGH' region motif; the sequence is VTAYDLCHIGH. Zn(2+)-binding residues include cysteine 209, histidine 234, and glutamate 238. The short motif at 266-270 is the 'KMSKS' region element; it reads KMSKS. Residue lysine 269 participates in ATP binding.

It belongs to the class-I aminoacyl-tRNA synthetase family. As to quaternary structure, monomer. Zn(2+) serves as cofactor.

It localises to the cytoplasm. It catalyses the reaction tRNA(Cys) + L-cysteine + ATP = L-cysteinyl-tRNA(Cys) + AMP + diphosphate. The chain is Cysteine--tRNA ligase from Baumannia cicadellinicola subsp. Homalodisca coagulata.